A 113-amino-acid polypeptide reads, in one-letter code: Virion membrane protein A21 homolog (113 aa).

A helical; Signal-anchor for type III membrane protein membrane pass occupies residues 1 to 23 (MFVLFLIVCYFILIFNIIVPKIA). At 24–113 (DKLRLEHEAF…CERAYTELFL (90 aa)) the chain is on the virion surface side.

Belongs to the chordopoxvirinae A21 family. As to quaternary structure, envelope protein part of a stable entry-fusion complex (EFC) which is at least composed of proteins A16, A21, A28, G3, G9, H2, J5, and L5. Formation of the viral membrane is necessary for the assembly of the complex. Post-translationally, contains two intramolecular disulfide bonds. They are created by the viral disulfide bond formation pathway, a poxvirus-specific pathway that operates on the cytoplasmic side of the MV membranes.

Its subcellular location is the virion membrane. Functionally, envelope protein part of the entry-fusion complex responsible for the virus membrane fusion with host cell membrane during virus entry. This chain is Virion membrane protein A21 homolog, found in Vertebrata (FPV).